The primary structure comprises 533 residues: Probable RNA-binding protein 46 (533 aa).

3 consecutive RRM domains span residues 61–139, 141–223, and 236–308; these read CEVF…VSLD, CRLF…WADP, and KVLY…LAKP.

As to quaternary structure, interacts with YTHDC2, MEIOC, MOV10, CNOT6L, DDX4, UPF1 and PABPC1.

Its subcellular location is the cytoplasm. In terms of biological role, essential for male and female fertility, playing a crucial role in regulating germ cell development by ensuring the proper progression of meiosis prophase I. Regulates mitotic-to-meiotic transition in spermatogenesis by forming a complex with MEIOC and YTHDC2 which recognizes and down-regulates mitotic transcripts for a successful meiotic entry. Required for normal synaptonemal complex formation during meiosis, binding meiotic cohesin subunit mRNAs containing GCCUAU/GUUCGA motifs in their 3'UTRs regions and positively regulating their translation. Required for spermatogonial differentiation in both developing and adult testis. This is Probable RNA-binding protein 46 (RBM46) from Homo sapiens (Human).